The sequence spans 888 residues: Extra-large guanine nucleotide-binding protein 1 (888 aa).

The interval 98-119 (SVIEHTEEEEEEEGGDGEDCEL) is disordered. A compositionally biased stretch (acidic residues) spans 103–118 (TEEEEEEEGGDGEDCE). The Nuclear localization signal motif lies at 205–222 (RRVRVVPVKKQPQTKGKK). The RING-type; degenerate zinc-finger motif lies at 225-268 (CYRCFKGSRFTEKEVCLVCDAKYCNSCVLRAMGSMPEGRKCVTC). Positions 482–879 (TLQKILLVGN…NICMSEYSMY (398 aa)) constitute a G-alpha domain. The segment at 485 to 498 (KILLVGNSGSGTST) is G1 motif. Residues 490 to 498 (GNSGSGTST) and 661 to 669 (DILYAEGVT) each bind GTP. Positions 497 and 669 each coordinate Ca(2+). The segment at 661 to 669 (DILYAEGVT) is G2 motif. The tract at residues 702-711 (YQLIRVPSRG) is G3 motif. The tract at residues 770-777 (LLILNKYD) is G4 motif. Residue 774–777 (NKYD) coordinates GTP. A G5 motif region spans residues 843–848 (SKSLDP).

Belongs to the G-alpha family. XLG subfamily. Ca(2+) is required as a cofactor. In terms of tissue distribution, ubiquitous. Strongly expressed in vascular tissues, root and shoot meristems and lateral root primordia.

It is found in the nucleus. Guanine nucleotide-binding proteins (G proteins) are involved as modulators or transducers in various transmembrane signaling systems. Binds GTP with specificity. Plays a role in the root morphogenesis by regulation of the cell proliferation. In Arabidopsis thaliana (Mouse-ear cress), this protein is Extra-large guanine nucleotide-binding protein 1 (XLG1).